The following is a 160-amino-acid chain: MGKIALQLKATLENVTNLRPVGEDFRWYLKMKCGNCGEISEKWQYIRLMDSVALKGGRGSASMVQKCKLCARENSIEILSSTIKSYNAEDNEKFKTIVEFECRGLEPVDFQPQAGFAAEGVESGTVFSDINLQEKDWTDYDEKTQESVGIFEVTHQFVKC.

Zn(2+) contacts are provided by Cys-33, Cys-36, Cys-67, and Cys-70. Ser-75 carries the phosphoserine modification.

The protein belongs to the UPF0587 family. As to quaternary structure, monomer.

The protein is CXXC motif containing zinc binding protein of Rattus norvegicus (Rat).